The chain runs to 816 residues: Lon protease (816 aa).

The region spanning 27 to 221 (LPLLPIRDVV…KVNDLLAREH (195 aa)) is the Lon N-terminal domain. Residue 372 to 379 (GPPGVGKT) coordinates ATP. In terms of domain architecture, Lon proteolytic spans 608-789 (KNEVGVVNGL…DEVLKLALEK (182 aa)). Active-site residues include Ser-695 and Lys-738. Positions 795-816 (PKGKAKPATPKVVVRPSKEISA) are disordered. Positions 800-809 (KPATPKVVVR) are enriched in low complexity.

It belongs to the peptidase S16 family. In terms of assembly, homohexamer. Organized in a ring with a central cavity.

The protein localises to the cytoplasm. It carries out the reaction Hydrolysis of proteins in presence of ATP.. ATP-dependent serine protease that mediates the selective degradation of mutant and abnormal proteins as well as certain short-lived regulatory proteins. Required for cellular homeostasis and for survival from DNA damage and developmental changes induced by stress. Degrades polypeptides processively to yield small peptide fragments that are 5 to 10 amino acids long. Binds to DNA in a double-stranded, site-specific manner. In Trichlorobacter lovleyi (strain ATCC BAA-1151 / DSM 17278 / SZ) (Geobacter lovleyi), this protein is Lon protease.